The chain runs to 931 residues: Dual O-methyltransferase/FAD-dependent monooxygenase elcB (931 aa).

An O-methyltransferase region spans residues 1-463 (MAASTGLSTV…TTDKARPNGD (463 aa)). D254 provides a ligand contact to S-adenosyl-L-methionine. The active-site Proton acceptor is H304. Residues 455-474 (TDKARPNGDTTHSGQASIPN) form a disordered region. Over residues 462–474 (GDTTHSGQASIPN) the composition is skewed to polar residues. The tract at residues 464–931 (TTHSGQASIP…TFEELDVAEL (468 aa)) is FAD-dependent monooxygenase. FAD-binding residues include E520, R604, D836, and A849.

This sequence in the C-terminal section; belongs to the paxM FAD-dependent monooxygenase family. The protein in the N-terminal section; belongs to the class I-like SAM-binding methyltransferase superfamily. Cation-independent O-methyltransferase family. COMT subfamily.

It carries out the reaction nor-toralactone + S-adenosyl-L-methionine = toralactone + S-adenosyl-L-homocysteine + H(+). It catalyses the reaction toralactone + NADH + O2 + H(+) = 1-(3,4,5-trihydroxy-7-methoxynaphthalen-2-yl)propan-2-one + CO2 + NAD(+). It participates in secondary metabolite biosynthesis. Dual O-methyltransferase/FAD-dependent monooxygenase; part of the gene cluster that mediates the biosynthesis of elsinochrome C, a perelyenequinone phytotoxin structurally similar to cercosporin. The first step of elsinochrome C biosynthesis is performed by the polyketide synthase elcA which catalyzes the formation of nor-toralactone. The starter unit acyltransferase (SAT) domain of elcA initiates polyketide extension by the selective utilization of acetyl-CoA, which is elongated to the heptaketide in the beta-ketoacyl synthase (KS) domain by successive condensations with six malonyl units introduced by the malonyl acyltransferase (MAT) domain. The product template (PT) domain catalyzes C4-C9 and C2-C11 aldol cyclizations and dehydrations to a trihydroxynaphthalene, which is thought to be delivered to the thioesterase (TE) domain for product release. The bifunctional enzyme elcB then methylates nor-toralactone to toralactone before conducting an unusual oxidative aromatic ring opening. The next step in perylenequinone biosynthesis is an O-methylation at the nascent OH-6 of the elcB product performed by the O-methyltransferase elcD. The oxidative coupling of the two monomeric naphthol units in perylenequinone biosynthesis is catalyzed by the FAD-dependent monooxygenase elcE and the multicopper oxidase elcG. ElcG might catalyze the first intermolecular coupling in a regio- and stereo-selective manner via a phenol radical coupling mechanism and the elcE could forge the second C-C bond intramolecularly via a hydride transfer mechanism. The fasciclin domain-containing protein elcF might also play a role duting this step. The last piece of the puzzle in the biosynthesis of elsinochrome C is the additional annulation by enolate coupling to afford the dihydrobenzo(ghi)perylenequinone system, catalyzed by the FAD-dependent monooxygenase elcH. The chain is Dual O-methyltransferase/FAD-dependent monooxygenase elcB from Phaeosphaeria nodorum (strain SN15 / ATCC MYA-4574 / FGSC 10173) (Glume blotch fungus).